The sequence spans 335 residues: Acetyl-coenzyme A carboxylase carboxyl transferase subunit alpha (335 aa).

The CoA carboxyltransferase C-terminal domain maps to glutamine 40–glutamate 294.

It belongs to the AccA family. In terms of assembly, acetyl-CoA carboxylase is a heterohexamer composed of biotin carboxyl carrier protein (AccB), biotin carboxylase (AccC) and two subunits each of ACCase subunit alpha (AccA) and ACCase subunit beta (AccD).

It localises to the cytoplasm. The catalysed reaction is N(6)-carboxybiotinyl-L-lysyl-[protein] + acetyl-CoA = N(6)-biotinyl-L-lysyl-[protein] + malonyl-CoA. It functions in the pathway lipid metabolism; malonyl-CoA biosynthesis; malonyl-CoA from acetyl-CoA: step 1/1. Functionally, component of the acetyl coenzyme A carboxylase (ACC) complex. First, biotin carboxylase catalyzes the carboxylation of biotin on its carrier protein (BCCP) and then the CO(2) group is transferred by the carboxyltransferase to acetyl-CoA to form malonyl-CoA. The polypeptide is Acetyl-coenzyme A carboxylase carboxyl transferase subunit alpha (Prochlorococcus marinus subsp. pastoris (strain CCMP1986 / NIES-2087 / MED4)).